A 206-amino-acid chain; its full sequence is Large ribosomal subunit protein mL62 (206 aa).

Residues 1–29 (MATAWCLPWTLRRAGAWLLTPPLRCPRRA) constitute a mitochondrion transit peptide.

It belongs to the prokaryotic/mitochondrial release factor family. Mitochondrion-specific ribosomal protein mL62 subfamily. Component of the mitochondrial 39S ribosomal subunit.

It is found in the mitochondrion. The catalysed reaction is an N-acyl-L-alpha-aminoacyl-tRNA + H2O = an N-acyl-L-amino acid + a tRNA + H(+). Its function is as follows. Essential peptidyl-tRNA hydrolase component of the mitochondrial large ribosomal subunit. Acts as a codon-independent translation release factor that has lost all stop codon specificity and directs the termination of translation in mitochondrion, possibly in case of abortive elongation. May be involved in the hydrolysis of peptidyl-tRNAs that have been prematurely terminated and thus in the recycling of stalled mitochondrial ribosomes. This chain is Large ribosomal subunit protein mL62, found in Ailuropoda melanoleuca (Giant panda).